Here is a 549-residue protein sequence, read N- to C-terminus: Ribosomal protein S6 kinase-like 1 (549 aa).

An MIT domain is found at 87 to 115 (IHVDPNKERREAVKLKITKYLRRAEEIFN). In terms of domain architecture, Protein kinase spans 145-539 (SAVEQLRGCR…VSKLKSHPFF (395 aa)). ATP is bound by residues 151-159 (RGCRVVGVI) and K177. The interval 260–325 (LTPARLPSGH…SDLPKAPGGH (66 aa)) is disordered. D412 acts as the Proton acceptor in catalysis.

This sequence belongs to the protein kinase superfamily. Ser/Thr protein kinase family. S6 kinase subfamily.

The enzyme catalyses L-seryl-[protein] + ATP = O-phospho-L-seryl-[protein] + ADP + H(+). It carries out the reaction L-threonyl-[protein] + ATP = O-phospho-L-threonyl-[protein] + ADP + H(+). This is Ribosomal protein S6 kinase-like 1 (RPS6KL1) from Pongo abelii (Sumatran orangutan).